A 677-amino-acid chain; its full sequence is Protein windpipe (677 aa).

Residues 1 to 20 form the signal peptide; the sequence is MERVHLTAWLALFLIVVANA. Residues 21–451 are Extracellular-facing; sequence TPTPARTPTG…IGKPKDDSSA (431 aa). 2 N-linked (GlcNAc...) asparagine glycosylation sites follow: N53 and N80. LRR repeat units follow at residues 91-116, 118-133, 134-156, and 158-183; these read LPEL…GLKR, NLKH…RKLP, QHLQ…LTHM, and QLHQ…NWLV. N-linked (GlcNAc...) asparagine glycosylation is found at N145 and N170. The region spanning 184–216 is the LRRCT domain; that stretch reads ERIVYMEHPVVCSYPLEFRGRSWLQLKQDEICK. Disordered stretches follow at residues 264–285, 298–317, and 325–385; these read AKKV…SGDL, TVAE…ASPS, and KDED…TVFS. Residues 347 to 372 show a composition bias toward basic and acidic residues; the sequence is SKVKITSEDDIDSDGKPEESDVRPLE. Positions 374–385 are enriched in polar residues; sequence PENSENPDTVFS. The helical transmembrane segment at 452–472 threads the bilayer; that stretch reads IYYLLAVIGLIVVGLVLFVAI. Topologically, residues 473–677 are cytoplasmic; sequence KRCKYDSNAA…EPTHQVINGH (205 aa). Disordered regions lie at residues 502–523 and 539–677; these read LGKP…LIGE and NGEA…INGH. Residues 595–607 show a composition bias toward low complexity; that stretch reads AQQQQLAEQNNNE.

As to quaternary structure, interacts with dome; the interaction promotes internalization of dome and its subsequent lysosomal degradation. In adult intestine, expressed in both small progenitor cells and large nuclei enterocytes (at protein level). During embryogenesis, restricted to the developing trachea.

It localises to the cell membrane. Its function is as follows. Plays a role in negative regulation of the JAK/STAT pathway by binding to the receptor dome and promoting its internalization for subsequent lysosomal degradation, thereby reducing JAK/STAT signaling. This is Protein windpipe from Drosophila melanogaster (Fruit fly).